The sequence spans 511 residues: 2,3-bisphosphoglycerate-independent phosphoglycerate mutase (511 aa).

Residue Asp-12 coordinates Mn(2+). Tyr-36 bears the Phosphotyrosine mark. Ser-62 is a binding site for Mn(2+). The active-site Phosphoserine intermediate is the Ser-62. Substrate is bound by residues His-123, 153-154 (RD), Arg-185, Arg-191, 261-264 (RPDR), and Lys-336. The Mn(2+) site is built by Asp-403, His-407, Asp-444, His-445, and His-462.

This sequence belongs to the BPG-independent phosphoglycerate mutase family. As to quaternary structure, monomer. Mn(2+) serves as cofactor.

It catalyses the reaction (2R)-2-phosphoglycerate = (2R)-3-phosphoglycerate. It participates in carbohydrate degradation; glycolysis; pyruvate from D-glyceraldehyde 3-phosphate: step 3/5. Its function is as follows. Essential for rapid growth and for sporulation. Catalyzes the interconversion of 2-phosphoglycerate and 3-phosphoglycerate. The sequence is that of 2,3-bisphosphoglycerate-independent phosphoglycerate mutase from Bacillus licheniformis (strain ATCC 14580 / DSM 13 / JCM 2505 / CCUG 7422 / NBRC 12200 / NCIMB 9375 / NCTC 10341 / NRRL NRS-1264 / Gibson 46).